A 166-amino-acid polypeptide reads, in one-letter code: Phosphopantetheine adenylyltransferase (166 aa).

Thr-9 lines the substrate pocket. ATP-binding positions include 9–10 (TF) and His-17. Residues Lys-41, Leu-73, and Arg-87 each coordinate substrate. ATP contacts are provided by residues 88–90 (GLR), Glu-98, and 123–129 (YQFISGT).

The protein belongs to the bacterial CoaD family. In terms of assembly, homohexamer. It depends on Mg(2+) as a cofactor.

The protein localises to the cytoplasm. The catalysed reaction is (R)-4'-phosphopantetheine + ATP + H(+) = 3'-dephospho-CoA + diphosphate. The protein operates within cofactor biosynthesis; coenzyme A biosynthesis; CoA from (R)-pantothenate: step 4/5. Its function is as follows. Reversibly transfers an adenylyl group from ATP to 4'-phosphopantetheine, yielding dephospho-CoA (dPCoA) and pyrophosphate. The sequence is that of Phosphopantetheine adenylyltransferase from Burkholderia mallei (strain NCTC 10229).